The primary structure comprises 380 residues: uncharacterized protein (380 aa).

The first 18 residues, methionine 1–serine 18, serve as a signal peptide directing secretion. Residues asparagine 104, asparagine 111, and asparagine 128 are each glycosylated (N-linked (GlcNAc...) asparagine). The chain crosses the membrane as a helical span at residues leucine 148 to tyrosine 168. Disordered stretches follow at residues proline 229 to glycine 256 and arginine 336 to valine 380. The segment covering proline 240–proline 249 has biased composition (pro residues). Positions valine 356–threonine 366 are enriched in basic and acidic residues.

It is found in the membrane. This is an uncharacterized protein from Homo sapiens (Human).